Consider the following 223-residue polypeptide: uncharacterized protein (223 aa).

Transmembrane regions (helical) follow at residues Leu-28–Thr-48, Leu-59–Ala-79, Ala-88–Ile-108, Ile-128–Ser-148, and Ala-176–Val-196.

It is found in the cell membrane. This is an uncharacterized protein from Mycoplasma pneumoniae (strain ATCC 29342 / M129 / Subtype 1) (Mycoplasmoides pneumoniae).